Here is a 288-residue protein sequence, read N- to C-terminus: MKKIKKAIIPAAGLGTRFLPATKAMPKEMLPILDKPTIQYIVEEASKAGIEDIIIVTGKHKRAIEDHFDNQKELEMVLENKGKADLLEKVQYSTDLANIFYVRQKEQKGLGHAIHTAKQFIGNEPFAVLLGDDIVESDTPAIKQLMDVYEETGHSVIGVQEVPESDTHRYGVIDPSAKEGSRYEVRQFVEKPKQGTAPSNLAIMGRYVLTPEIFDYLETQQEGAGNEIQLTDAIERMNSKQQVYAYDFEGNRYDVGEKLGFVKTTIEYALKDPEMSQDLKAFIKQLDI.

The protein belongs to the UDPGP type 2 family.

It carries out the reaction alpha-D-glucose 1-phosphate + UTP + H(+) = UDP-alpha-D-glucose + diphosphate. It participates in glycolipid metabolism; diglucosyl-diacylglycerol biosynthesis. Functionally, catalyzes the formation of UDP-glucose from glucose-1-phosphate and UTP. This is an intermediate step in the biosynthesis of diglucosyl-diacylglycerol (Glc2-DAG), i.e. a glycolipid found in the membrane, which is also used as a membrane anchor for lipoteichoic acid (LTA). This chain is UTP--glucose-1-phosphate uridylyltransferase (gtaB), found in Staphylococcus epidermidis (strain ATCC 35984 / DSM 28319 / BCRC 17069 / CCUG 31568 / BM 3577 / RP62A).